A 392-amino-acid chain; its full sequence is Glutamyl-tRNA reductase (392 aa).

Substrate-binding positions include 38 to 41 (TCNR), Ser-86, 91 to 93 (EDQ), and Gln-97. The active-site Nucleophile is Cys-39. 165-170 (GAGEMA) contributes to the NADP(+) binding site.

It belongs to the glutamyl-tRNA reductase family. As to quaternary structure, homodimer.

The catalysed reaction is (S)-4-amino-5-oxopentanoate + tRNA(Glu) + NADP(+) = L-glutamyl-tRNA(Glu) + NADPH + H(+). It functions in the pathway porphyrin-containing compound metabolism; protoporphyrin-IX biosynthesis; 5-aminolevulinate from L-glutamyl-tRNA(Glu): step 1/2. Its function is as follows. Catalyzes the NADPH-dependent reduction of glutamyl-tRNA(Glu) to glutamate 1-semialdehyde (GSA). The chain is Glutamyl-tRNA reductase from Methanocaldococcus jannaschii (strain ATCC 43067 / DSM 2661 / JAL-1 / JCM 10045 / NBRC 100440) (Methanococcus jannaschii).